A 240-amino-acid polypeptide reads, in one-letter code: Lactate utilization protein C (240 aa).

The protein belongs to the LutC/YkgG family.

Its function is as follows. Is involved in L-lactate degradation and allows cells to grow with lactate as the sole carbon source. The chain is Lactate utilization protein C from Bacillus licheniformis (strain ATCC 14580 / DSM 13 / JCM 2505 / CCUG 7422 / NBRC 12200 / NCIMB 9375 / NCTC 10341 / NRRL NRS-1264 / Gibson 46).